We begin with the raw amino-acid sequence, 278 residues long: Putative transcription factor kapC (278 aa).

Pro residues predominate over residues 1–10 (MQPALAPAPH). Residues 1–121 (MQPALAPAPH…QNRAAQRAFR (121 aa)) form a disordered region. Over residues 56-68 (PTATTSPRDQNNI) the composition is skewed to polar residues. The region spanning 103–166 (PLSTSKRAAQ…EYVINLQSRL (64 aa)) is the bZIP domain. Residues 104-127 (LSTSKRAAQNRAAQRAFRQRKESY) are basic motif. Residues 109 to 119 (RAAQNRAAQRA) are compositionally biased toward low complexity. Residues 131-162 (LEEQVKEYEVMSQEYKALQAENYQLREYVINL) are leucine-zipper. The disordered stretch occupies residues 173–278 (VPELPGNIDL…PPTHGLPMVS (106 aa)). Low complexity predominate over residues 198–214 (PGQAGASAPPQGSPQSQ). Positions 215-226 (VSIANDDMNSLN) are enriched in polar residues. Residues 254-269 (GRGDETADPSETKTEP) show a composition bias toward basic and acidic residues.

This sequence belongs to the bZIP family.

Its subcellular location is the nucleus. In terms of biological role, putative transcription factor. This is Putative transcription factor kapC (kapC) from Emericella nidulans (strain FGSC A4 / ATCC 38163 / CBS 112.46 / NRRL 194 / M139) (Aspergillus nidulans).